The primary structure comprises 315 residues: Cysteine proteinase 1 (315 aa).

A signal peptide spans 1–13 (MFTFILMFYIGYG). Positions 14–93 (IDFNTWVANN…KGEVRYLNIQ (80 aa)) are cleaved as a propeptide — activation peptide. Disulfide bonds link Cys115–Cys161 and Cys152–Cys193. Residue Cys118 is part of the active site. Residues His259 and Asn279 contribute to the active site.

It belongs to the peptidase C1 family.

Its subcellular location is the lysosome. With respect to regulation, inhibited by cysteine protease inhibitors ICP1 and ICP2. Its function is as follows. Cysteine protease which degrades matrix proteins such as collagen, laminin and fibronectin and thus is involved in the destruction of human tissue. Can abolish adhesion. May play an important role in pathogenicity. The chain is Cysteine proteinase 1 from Entamoeba histolytica (strain ATCC 30459 / HM-1:IMSS / ABRM).